The sequence spans 140 residues: Ribonuclease P protein subunit p20 (140 aa).

It belongs to the histone-like Alba family. In terms of assembly, component of nuclear RNase P and RNase MRP complexes. RNase P consists of a catalytic RNA moiety and 10 different protein chains; POP1, POP4, POP5, POP7, RPP14, RPP21, RPP25, RPP30, RPP38 and RPP40. Within the RNase P complex, POP1, POP7 and RPP25 form the 'finger' subcomplex, POP5, RPP14, RPP40 and homodimeric RPP30 form the 'palm' subcomplex, and RPP21, POP4 and RPP38 form the 'wrist' subcomplex. All subunits of the RNase P complex interact with the catalytic RNA. Several subunits of RNase P are also part of the RNase MRP complex. RNase MRP consists of a catalytic RNA moiety and about 8 protein subunits; POP1, POP7, RPP25, RPP30, RPP38, RPP40 and possibly also POP4 and POP5. Interacts with SMN1. POP7 forms a heterodimer with RPP25 that binds to the P3 stem loop of the catalytic RNA.

It is found in the nucleus. The protein resides in the nucleolus. Its subcellular location is the cytoplasm. It localises to the cytoplasmic granule. Its function is as follows. Component of ribonuclease P, a ribonucleoprotein complex that generates mature tRNA molecules by cleaving their 5'-ends. Also a component of the MRP ribonuclease complex, which cleaves pre-rRNA sequences. This is Ribonuclease P protein subunit p20 (Pop7) from Mus musculus (Mouse).